Consider the following 593-residue polypeptide: Solute carrier family 13 member 2 (593 aa).

4 helical membrane passes run 11–31 (YRMYLLVFLLPISLLPLPILV), 53–73 (ALPLAVTALLPLCLFPMMGIM), 86–106 (TNVLFIGGLLLAIAVEHWNLH), and 121–141 (PALLILGFMVVTAFLSMWISN). Residues 164–184 (SNVEEGSDNPTFELQEPSPQK) show a composition bias toward polar residues. The tract at residues 164 to 204 (SNVEEGSDNPTFELQEPSPQKETSKVDEKDNGQAQPLPAVP) is disordered. The segment covering 185 to 194 (ETSKVDEKDN) has biased composition (basic and acidic residues). Helical transmembrane passes span 221–241 (GMSLCVCYSASIGGIATLTGT), 270–290 (FAFPIMVILLLLSWLWLQILF), 327–347 (PMSFAEKAVFILFVILVLLWF), 369–389 (VMVSDGSASILIGVFLFMVPS), 451–471 (LMPLQHVPPPATVFIICLLVA), 485–505 (LLLPILASMAQAICLHPLYVM), 514–534 (LAFMLPVATPPNAIVFSFGGL), and 543–563 (GIMLNIIGVLVIMLAINSWGV).

This sequence belongs to the SLC13A/DASS transporter (TC 2.A.47) family. NADC subfamily. Abundant in kidney and small intestine.

Its subcellular location is the apical cell membrane. It catalyses the reaction succinate(out) + 3 Na(+)(out) = succinate(in) + 3 Na(+)(in). The catalysed reaction is fumarate(out) + 3 Na(+)(out) = fumarate(in) + 3 Na(+)(in). It carries out the reaction 2-oxoglutarate(out) + 3 Na(+)(out) = 2-oxoglutarate(in) + 3 Na(+)(in). Its activity is regulated as follows. Li(+) decreases succinate transport in the presence of Na(+), by competing at one of the three cation binding sites. Functionally, low-affinity sodium-dicarboxylate cotransporter, that mediates the entry of citric acid cycle intermediates, such as succinate, citrate, fumarate and alpha-ketoglutarate (2-oxoglutarate) into the small intestine and renal proximal tubule. Transports the dicarboxylate into the cell with a probable stoichiometry of 3 Na(+) for 1 divalent dicarboxylate, rendering the process electrogenic. Citrate is transported in protonated form as a divalent anion, rather than the trivalent form which is normally found in blood. Has a critical role in renal dicarboxylate transport. In Oryctolagus cuniculus (Rabbit), this protein is Solute carrier family 13 member 2 (SLC13A2).